Consider the following 360-residue polypeptide: Protein phosphatase 1 regulatory subunit 7 (360 aa).

The segment at 1 to 64 (MAAERGAGQQ…GEEDPEEEHE (64 aa)) is disordered. At A2 the chain carries N-acetylalanine. 5 positions are modified to phosphoserine: S12, S24, S27, S44, and S47. A compositionally biased stretch (basic and acidic residues) spans 17-34 (EVDRRVESEESGDEEGKK). Acidic residues predominate over residues 53–63 (ERGEEDPEEEH). LRR repeat units follow at residues 77–98 (DAED…EVLK), 99–120 (KVKT…EELQ), 121–142 (SLRE…EALT), 143–164 (ELEI…DKVT), 165–186 (QLKK…SNLH), 187–208 (QLQM…DTLT), 209–230 (NLES…DALT), 231–252 (NLTV…QNLV), 253–274 (NLQE…ENNN), 275–296 (KLTM…SHLT), and 297–318 (EPQE…DELK). A Phosphoserine modification is found at S322. The region spanning 331 to 360 (NPLQKDPQYRRKVMLALPSVRQIDATFVRF) is the LRRCT domain.

It belongs to the SDS22 family. Interacts with PPP1CA, PPP1CB and PPP1CC/PPP1G.

Its subcellular location is the nucleus. Its function is as follows. Regulatory subunit of protein phosphatase 1. In Pongo abelii (Sumatran orangutan), this protein is Protein phosphatase 1 regulatory subunit 7 (PPP1R7).